Reading from the N-terminus, the 146-residue chain is Small ribosomal subunit protein bS16 (146 aa).

Residues 119-146 form a disordered region; the sequence is GSENKGGKSKKAEEKSAEKTAEKSEGEA. Over residues 128–146 the composition is skewed to basic and acidic residues; sequence KKAEEKSAEKTAEKSEGEA.

The protein belongs to the bacterial ribosomal protein bS16 family.

The polypeptide is Small ribosomal subunit protein bS16 (Thermobifida fusca (strain YX)).